Reading from the N-terminus, the 237-residue chain is Ribose-5-phosphate isomerase A (237 aa).

Residues Thr-32–Thr-35, Asp-85–Asp-88, and Lys-99–Gly-102 each bind substrate. Glu-108 functions as the Proton acceptor in the catalytic mechanism. A substrate-binding site is contributed by Arg-126.

This sequence belongs to the ribose 5-phosphate isomerase family. Homodimer.

The enzyme catalyses aldehydo-D-ribose 5-phosphate = D-ribulose 5-phosphate. Its pathway is carbohydrate degradation; pentose phosphate pathway; D-ribose 5-phosphate from D-ribulose 5-phosphate (non-oxidative stage): step 1/1. Functionally, catalyzes the reversible conversion of ribose-5-phosphate to ribulose 5-phosphate. The protein is Ribose-5-phosphate isomerase A of Aeropyrum pernix (strain ATCC 700893 / DSM 11879 / JCM 9820 / NBRC 100138 / K1).